We begin with the raw amino-acid sequence, 185 residues long: Probable chorismate pyruvate-lyase (185 aa).

Positions 75, 113, and 174 each coordinate substrate.

Belongs to the UbiC family.

It localises to the cytoplasm. It carries out the reaction chorismate = 4-hydroxybenzoate + pyruvate. Its pathway is cofactor biosynthesis; ubiquinone biosynthesis. Functionally, removes the pyruvyl group from chorismate, with concomitant aromatization of the ring, to provide 4-hydroxybenzoate (4HB) for the ubiquinone pathway. In Aromatoleum aromaticum (strain DSM 19018 / LMG 30748 / EbN1) (Azoarcus sp. (strain EbN1)), this protein is Probable chorismate pyruvate-lyase.